Here is a 59-residue protein sequence, read N- to C-terminus: UPF0181 protein CKO_01169 (59 aa).

This sequence belongs to the UPF0181 family.

The sequence is that of UPF0181 protein CKO_01169 from Citrobacter koseri (strain ATCC BAA-895 / CDC 4225-83 / SGSC4696).